We begin with the raw amino-acid sequence, 335 residues long: Type 1 fimbrin D-mannose specific adhesin (335 aa).

The first 22 residues, 1-22, serve as a signal peptide directing secretion; the sequence is MKIYSALLLAGTALFFTHPALA.

Belongs to the fimbrial protein family.

Its subcellular location is the fimbrium. Involved in regulation of length and mediation of adhesion of type 1 fimbriae (but not necessary for the production of fimbriae). A mannose-binding adhesin. The polypeptide is Type 1 fimbrin D-mannose specific adhesin (fimH) (Salmonella typhimurium (strain LT2 / SGSC1412 / ATCC 700720)).